Here is a 435-residue protein sequence, read N- to C-terminus: MAAYLEIEKVIGREILDSRGNPTVEAEVYLADGTVGRGAAPSGASTGEFEALELRDKDKSRYLGKGVTKAVENINTVINDCLFGIDASDIYAVDAAMIKADGTKDKSNLGANAILAVSIAAARAASVSLDIPLYRFLGGVSGNRLPVPMMNIINGGCHALSSGLDVQEFMIMPVGAPSFKECLRWCAEVFHALAAILKERGLATSVGDEGGFAPALKSDEEAIETILQAVEKAGYKPGRDFRIAMDAASSEWKSEKGKGYYKLPKAGTEYTAEELIEHWAKLCEKYPIISIEDGLDEEDWEGWKKLTDRLGDKVQLVGDDLFVTNTERLSKGIELGAGNAILIKLNQIGSVSETLEAIKMAHKAGYTAISSHRSGETADTTIADLAVALNTCQIKTGAPSRSERVAKYNQLLRIEEQLGASAVYPGIRAFNVNND.

Glutamine 167 is a (2R)-2-phosphoglycerate binding site. The Proton donor role is filled by glutamate 209. Mg(2+)-binding residues include aspartate 246, glutamate 292, and aspartate 319. Residues lysine 344, arginine 373, serine 374, and lysine 395 each contribute to the (2R)-2-phosphoglycerate site. Catalysis depends on lysine 344, which acts as the Proton acceptor.

It belongs to the enolase family. Requires Mg(2+) as cofactor.

The protein localises to the cytoplasm. Its subcellular location is the secreted. It is found in the cell surface. It catalyses the reaction (2R)-2-phosphoglycerate = phosphoenolpyruvate + H2O. The protein operates within carbohydrate degradation; glycolysis; pyruvate from D-glyceraldehyde 3-phosphate: step 4/5. Catalyzes the reversible conversion of 2-phosphoglycerate (2-PG) into phosphoenolpyruvate (PEP). It is essential for the degradation of carbohydrates via glycolysis. This Lachnospira eligens (strain ATCC 27750 / DSM 3376 / VPI C15-48 / C15-B4) (Eubacterium eligens) protein is Enolase.